Reading from the N-terminus, the 485-residue chain is Phosphoglucosamine mutase (485 aa).

Ser133 (phosphoserine intermediate) is an active-site residue. 4 residues coordinate Mg(2+): Ser133, Asp274, Asp276, and Asp278. Phosphoserine is present on Ser133.

It belongs to the phosphohexose mutase family. The cofactor is Mg(2+). In terms of processing, activated by phosphorylation.

The catalysed reaction is alpha-D-glucosamine 1-phosphate = D-glucosamine 6-phosphate. Its function is as follows. Catalyzes the conversion of glucosamine-6-phosphate to glucosamine-1-phosphate. This is Phosphoglucosamine mutase from Rippkaea orientalis (strain PCC 8801 / RF-1) (Cyanothece sp. (strain PCC 8801)).